The chain runs to 467 residues: MEQNVGYVVQIIGPVIDIRFESENLPAINNAIEIHFDGKKLVAEVAQHLGNDTVRCVALGSTDGLRRGVKAIDTGGPIKVPVGRGTLGRIFNVLGEPIDNKGEVVASDYWPIHRSAPSFEEQVPAVEIFETGIKVIDLLAPYAKGGKIGLFGGAGVGKTVLIMELIRNIATEHGGFSIFTGVGERTREGNDLWLDMNESGVIEKTVLVFGQMNEPPGARMRVALTGLTMAEYFRDVEGQDVLLFIDNIFRFIQAGSEVSALLGRIPSAVGYQPTLANEVGALQERITSTKKGSITSVQAIYVPADDLTDPAPATTFAHLDATTVLSRQIAELGIYPAVDPLDSTSRILDPRIVGEEHYYVARTVQQILQRYKELQDIIAILGMDELSEEDKLIVYRARKIQRFLSQPFFVAEAFTGRPGRYVKLKDTIRGFKEIIEGKMDHIPEQYFYMVGTIDEVYENYEKDMKGK.

ATP is bound at residue 152 to 159; that stretch reads GGAGVGKT.

It belongs to the ATPase alpha/beta chains family. In terms of assembly, F-type ATPases have 2 components, CF(1) - the catalytic core - and CF(0) - the membrane proton channel. CF(1) has five subunits: alpha(3), beta(3), gamma(1), delta(1), epsilon(1). CF(0) has three main subunits: a(1), b(2) and c(9-12). The alpha and beta chains form an alternating ring which encloses part of the gamma chain. CF(1) is attached to CF(0) by a central stalk formed by the gamma and epsilon chains, while a peripheral stalk is formed by the delta and b chains.

The protein localises to the cell membrane. It catalyses the reaction ATP + H2O + 4 H(+)(in) = ADP + phosphate + 5 H(+)(out). Its function is as follows. Produces ATP from ADP in the presence of a proton gradient across the membrane. The catalytic sites are hosted primarily by the beta subunits. The polypeptide is ATP synthase subunit beta (Caldicellulosiruptor bescii (strain ATCC BAA-1888 / DSM 6725 / KCTC 15123 / Z-1320) (Anaerocellum thermophilum)).